We begin with the raw amino-acid sequence, 205 residues long: Ras-related and estrogen-regulated growth inhibitor-like protein (205 aa).

Positions 1–205 (MSNFLHLKYN…NVFGKRRKSV (205 aa)) are small GTPase-like. GTP-binding positions include 11 to 18 (EKSVSVTK), 58 to 64 (DPCSQTQ), and 123 to 126 (NKRD).

Belongs to the small GTPase superfamily. Ras family.

The catalysed reaction is GTP + H2O = GDP + phosphate + H(+). Functionally, binds GDP/GTP and may possess intrinsic GTPase activity. This Homo sapiens (Human) protein is Ras-related and estrogen-regulated growth inhibitor-like protein (RERGL).